Consider the following 191-residue polypeptide: Adenine phosphoribosyltransferase (191 aa).

Belongs to the purine/pyrimidine phosphoribosyltransferase family. As to quaternary structure, homodimer.

The protein localises to the cytoplasm. The catalysed reaction is AMP + diphosphate = 5-phospho-alpha-D-ribose 1-diphosphate + adenine. The protein operates within purine metabolism; AMP biosynthesis via salvage pathway; AMP from adenine: step 1/1. Its function is as follows. Catalyzes a salvage reaction resulting in the formation of AMP, that is energically less costly than de novo synthesis. In Bordetella bronchiseptica (strain ATCC BAA-588 / NCTC 13252 / RB50) (Alcaligenes bronchisepticus), this protein is Adenine phosphoribosyltransferase.